Consider the following 83-residue polypeptide: Phosphoribosylformylglycinamidine synthase subunit PurS (83 aa).

Belongs to the PurS family. Homodimer. Part of the FGAM synthase complex composed of 1 PurL, 1 PurQ and 2 PurS subunits.

Its subcellular location is the cytoplasm. It catalyses the reaction N(2)-formyl-N(1)-(5-phospho-beta-D-ribosyl)glycinamide + L-glutamine + ATP + H2O = 2-formamido-N(1)-(5-O-phospho-beta-D-ribosyl)acetamidine + L-glutamate + ADP + phosphate + H(+). It functions in the pathway purine metabolism; IMP biosynthesis via de novo pathway; 5-amino-1-(5-phospho-D-ribosyl)imidazole from N(2)-formyl-N(1)-(5-phospho-D-ribosyl)glycinamide: step 1/2. In terms of biological role, part of the phosphoribosylformylglycinamidine synthase complex involved in the purines biosynthetic pathway. Catalyzes the ATP-dependent conversion of formylglycinamide ribonucleotide (FGAR) and glutamine to yield formylglycinamidine ribonucleotide (FGAM) and glutamate. The FGAM synthase complex is composed of three subunits. PurQ produces an ammonia molecule by converting glutamine to glutamate. PurL transfers the ammonia molecule to FGAR to form FGAM in an ATP-dependent manner. PurS interacts with PurQ and PurL and is thought to assist in the transfer of the ammonia molecule from PurQ to PurL. The sequence is that of Phosphoribosylformylglycinamidine synthase subunit PurS from Methanocaldococcus jannaschii (strain ATCC 43067 / DSM 2661 / JAL-1 / JCM 10045 / NBRC 100440) (Methanococcus jannaschii).